The following is a 2206-amino-acid chain: MGAQVSSQKVGAHENSNRAYGGSTINYTTINYYKDSASNAASKQDYSQDPSKFTEPLKDVLIKTAPALNSPNVEACGYSDRVLQLTLGNSTITTQEAANSVVAYGRWPEFIRDDEANPVDQPTEPDVATSRFYTLDTVMWGKESRGWWWKLPDALRDMGLFGQNMYYHYLGRSGYTVHVQCNASKFHQGSLGVFAIPEFCLAGDSDTQRYTSYANANPGEKGGKFYAQFNKDTAVTSPKREFCPVDYLLGCGVLIGNAFVFPHQIINLRTNNSATLVLPYVNALSIDSMVKHNNWGIAILPLSPLDFAQDSSVEIPITVTIAPMCSEFNGLRNVTAPKLQGLPVLNTPGSNQYLTSDNHQSPCAIPEFDVTPPIDIPGEVKNVMELAEIDTMIPLNLENTKRNTMDMYRVRLSDSANLSGPILCLSLSPAADPRLSHTMLGEVLNYYTHWAGSLKFTFLFCGSMMATGKLLVAYAPPGAQPPTSRKEAMLGTHVIWDLGLQSSCTMVVPWISNVTYRQTTQDSFTEGGYISMFYQTRIVVPLSTPKAMDMLGFVSACNDFSVRLLRDTTHISQAAMPQGVDDLITEVAQNALALSLPKPQSNLPDTKASGPAHSKEVPTLTAVETGATNPLVPSDTVQTRHVIQQRSRSESTIESFFARGACVAIIEVDNEQPATNVQKLFATWRITYKDTVQLRRKLEFFTYSRFDMEFTFVVTANFTNSNNGHALNQVYQIMYIPPGAPTPKSWDDYTWQTSSNPSIFYTYGAAPARISVPYVGLANAYSHFYDGFAKVPLKSDANDQVGDSLYSAMAVDDFGVLAIRVVNDHNPTKVTSKVRVYMKPKHVRVWCPRPPRAVPYYGPGVDYKDGLAPLSEKGLTTYGFGHQNKAVYTAGYKICNYHLATQEDLQNAVSVMWNRDLLVTESKAQGIDSIARCNCSTGVYYCESRSRYYPVSFVGPTFQYMEANDYYPARYQSHMLIGHGFASPGDCGGILRCQHGVIGIITAGGEGLVAFSDIRDLYAYEEEAMEQGISSYVESLGAAFGSGFTQQIGDKIIELTGMVTSTITEKLLKNLIKIVSSLVIITRNYDDTTTVLATLALLGCDVSPWQWLKKKACDILEIPYVMRQGDSWLKKFTEACNAAKGLEWVSNKISKFIDWLREKIIPQARDKLEFVTKLKQLEMLENQIATIHQSCPSQEHQEILFNNVRWLSIQSKRFAPLYALEAKRIQKLEHTINNYIQFKSKHRIEPVCLLVHGSPGTGKSVATNLIARAIAEKENTSTYSLPPDPSHFDGYKQQGVVIMDDLNQNPDGADMKLFCQMVSTVEFIPPMASLEEKGILFTSNYVLASTNSSRITPPTVAHSDALARRFAFDMDIQVMSEYSRDGKLNMTMATEMCKNCHQPANFKRCCPLVCGKAIQLMDKSSRVRYSIDQITTMIVNEKNRRSNIGNCMEALFQGPLQYKDLKIDIKTTPPPECINDLLQAVDSQEVRDYCEKKGWIVNITSQVQTERNINRAMTILQAVTTFAAVAGVVYVMYKLFAGHQGAYTGLPNKRPNVPTIRTAKVQGPGFDYAVAMAKRNILTATTSKGEFTMLGVHDNVAILPTHASPGETIVIDGKEIEVLDAKALEDQAGTNLEITIVTLKRNEKFRDIRPHIPAQITETNDGVLIVNTSKYPNMYVPVGAVTEQGYLNLGGRQTARTLMYNFPTRAGQCGGVITCTGKVIGMHVGGNGSHGFAAALKRSYFTQSQGEIQWMRPSKEVGYPIINAPSKTKLEPSAFHYVFEGVKEPAVLTKNDPRFKTGFEEAIFSKYVGNKITEVDEYMKEAVDHYAGQLMSLDINTEQMCLEDAMYGTDGLEALDLSTSAGYPYVTMGKKKRDILNKQTRDTKEMQRLLDTYGINLPLVTYVKDELRSKTKVEQGKSRLIEASSLNDSVAMRMAFGNLYAAFHKNPGVVTGSAVGCDPDLFWSKIPVLMEEKLFAFDYTGYDASLSPAWFEALKMVLEKIGFGDRVDYIDYLNHSHHLYKNKTYCVKGGMPSGCSGTSIFNSMINNLIIRTLLLKTYKGIDLDHLKMIAYGDDVIASYPHEVDASLLAQSGKDYGLTMTPADKSATFETVTWENVTFLKRFFRADERYPFLIHPVMPMKEIHESIRWTKDPRNTQDHVRSLCLLAWHNGEDEYNKFLAMIRSVPIGRALLLPEYSTLYRRWLDSF.

Gly-2 carries the N-myristoyl glycine; by host lipid modification. Residues 2 to 1517 (GAQVSSQKVG…NINRAMTILQ (1516 aa)) lie on the Cytoplasmic side of the membrane. Amphipathic alpha-helix regions lie at residues 579–599 (GVDD…LPKP) and 579–603 (GVDD…QSNL). Catalysis depends on for protease 2A activity residues His-898 and Asp-916. Zn(2+) contacts are provided by Cys-933 and Cys-935. Cys-987 serves as the catalytic For protease 2A activity. Zn(2+) is bound by residues Cys-993 and His-995. Residues 1125 to 1197 (GDSWLKKFTE…HQSCPSQEHQ (73 aa)) form a membrane-binding region. An oligomerization region spans residues 1125–1263 (GDSWLKKFTE…SPGTGKSVAT (139 aa)). An RNA-binding region spans residues 1146–1150 (SNKIS). The SF3 helicase domain occupies 1229 to 1385 (EHTINNYIQF…SEYSRDGKLN (157 aa)). Residue 1253–1260 (GSPGTGKS) coordinates ATP. Zn(2+) contacts are provided by Cys-1393, Cys-1396, Cys-1405, and Cys-1410. The C4-type zinc finger occupies 1393–1410 (CKNCHQPANFKRCCPLVC). The RNA-binding stretch occupies residues 1437–1444 (EKNRRSNI). Residues 1448–1453 (MEALFQ) form an oligomerization region. The stretch at 1518-1533 (AVTTFAAVAGVVYVMY) is an intramembrane region. Residues 1534-2206 (KLFAGHQGAY…TLYRRWLDSF (673 aa)) lie on the Cytoplasmic side of the membrane. Tyr-1543 carries the post-translational modification O-(5'-phospho-RNA)-tyrosine. The 179-residue stretch at 1563-1741 (GPGFDYAVAM…FAAALKRSYF (179 aa)) folds into the Peptidase C3 domain. Residues His-1602, Glu-1633, and Cys-1709 each act as for protease 3C activity in the active site. A RdRp catalytic domain is found at 1972–2087 (EKLFAFDYTG…SYPHEVDASL (116 aa)). Mg(2+) is bound by residues Asp-1978 and Asp-2073.

Belongs to the picornaviruses polyprotein family. As to quaternary structure, interacts with capsid protein VP1 and capsid protein VP3 to form heterotrimeric protomers. In terms of assembly, interacts with capsid protein VP0, and capsid protein VP3 to form heterotrimeric protomers. Interacts with human PVR. Five protomers subsequently associate to form pentamers which serve as building blocks for the capsid. Interacts with capsid protein VP2, capsid protein VP3 and capsid protein VP4 following cleavage of capsid protein VP0. Interacts with capsid protein VP1 and capsid protein VP3 in the mature capsid. As to quaternary structure, interacts with capsid protein VP0 and capsid protein VP1 to form heterotrimeric protomers. Five protomers subsequently associate to form pentamers which serve as building blocks for the capsid. Interacts with capsid protein VP4 in the mature capsid. Interacts with protein 2C; this interaction may be important for virion morphogenesis. In terms of assembly, interacts with capsid protein VP1 and capsid protein VP3. Homodimer. As to quaternary structure, homohexamer; forms a hexameric ring structure with 6-fold symmetry characteristic of AAA+ ATPases. Interacts (via N-terminus) with host RTN3 (via reticulon domain); this interaction is important for viral replication. Interacts with capsid protein VP3; this interaction may be important for virion morphogenesis. In terms of assembly, interacts with protein 3CD. Homodimer. Interacts with host GBF1. Interacts (via GOLD domain) with host ACBD3 (via GOLD domain); this interaction allows the formation of a viral protein 3A/ACBD3 heterotetramer with a 2:2 stoichiometry, which will stimulate the recruitment of host PI4KB in order to synthesize PI4P at the viral RNA replication sites. As to quaternary structure, interacts with RNA-directed RNA polymerase. In terms of assembly, interacts with protein 3AB and with RNA-directed RNA polymerase. Interacts with Viral protein genome-linked and with protein 3CD. Mg(2+) is required as a cofactor. Post-translationally, specific enzymatic cleavages in vivo by the viral proteases yield processing intermediates and the mature proteins. Myristoylation is required for the formation of pentamers during virus assembly. Further assembly of 12 pentamers and a molecule of genomic RNA generates the provirion. In terms of processing, during virion maturation, immature virions are rendered infectious following cleavage of VP0 into VP4 and VP2. This maturation seems to be an autocatalytic event triggered by the presence of RNA in the capsid and it is followed by a conformational change infectious virion. Post-translationally, myristoylation is required during RNA encapsidation and formation of the mature virus particle. VPg is uridylylated by the polymerase into VPg-pUpU. This acts as a nucleotide-peptide primer for the genomic RNA replication.

The protein resides in the virion. It localises to the host cytoplasm. The protein localises to the host cytoplasmic vesicle membrane. It is found in the host nucleus. The catalysed reaction is a ribonucleoside 5'-triphosphate + H2O = a ribonucleoside 5'-diphosphate + phosphate + H(+). The enzyme catalyses Selective cleavage of Tyr-|-Gly bond in the picornavirus polyprotein.. It catalyses the reaction RNA(n) + a ribonucleoside 5'-triphosphate = RNA(n+1) + diphosphate. It carries out the reaction Selective cleavage of Gln-|-Gly bond in the poliovirus polyprotein. In other picornavirus reactions Glu may be substituted for Gln, and Ser or Thr for Gly.. With respect to regulation, replication or transcription is subject to high level of random mutations by the nucleotide analog ribavirin. Its function is as follows. Forms an icosahedral capsid of pseudo T=3 symmetry with capsid proteins VP2 and VP3. The capsid is 300 Angstroms in diameter, composed of 60 copies of each capsid protein and enclosing the viral positive strand RNA genome. Capsid protein VP1 mainly forms the vertices of the capsid. Capsid protein VP1 interacts with host cell receptor PVR to provide virion attachment to target host cells. This attachment induces virion internalization predominantly through clathrin- and caveolin-independent endocytosis in Hela cells and through caveolin-mediated endocytosis in brain microvascular endothelial cells. Tyrosine kinases are probably involved in the entry process. Virus binding to PVR induces increased junctional permeability and rearrangement of junctional proteins. Modulation of endothelial tight junctions, as well as cytolytic infection of endothelial cells themselves, may result in loss of endothelial integrity which may help the virus to reach the CNS. After binding to its receptor, the capsid undergoes conformational changes. Capsid protein VP1 N-terminus (that contains an amphipathic alpha-helix) and capsid protein VP4 are externalized. Together, they shape a pore in the host membrane through which viral genome is translocated to host cell cytoplasm. Forms an icosahedral capsid of pseudo T=3 symmetry with capsid proteins VP2 and VP3. The capsid is 300 Angstroms in diameter, composed of 60 copies of each capsid protein and enclosing the viral positive strand RNA genome. Functionally, lies on the inner surface of the capsid shell. After binding to the host receptor, the capsid undergoes conformational changes. Capsid protein VP4 is released, Capsid protein VP1 N-terminus is externalized, and together, they shape a pore in the host membrane through which the viral genome is translocated into the host cell cytoplasm. In terms of biological role, component of immature procapsids, which is cleaved into capsid proteins VP4 and VP2 after maturation. Allows the capsid to remain inactive before the maturation step. Its function is as follows. Cysteine protease that cleaves viral polyprotein and specific host proteins. It is responsible for the autocatalytic cleavage between the P1 and P2 regions, which is the first cleavage occurring in the polyprotein. Also cleaves the host translation initiation factor EIF4G1, in order to shut down the capped cellular mRNA translation. Inhibits the host nucleus-cytoplasm protein and RNA trafficking by cleaving host members of the nuclear pores including NUP98, NUP62 and NUP153. Counteracts stress granule formation probably by antagonizing its assembly or promoting its dissassembly. Cleaves and inhibits host IFIH1/MDA5, thereby inhibiting the type-I IFN production and the establishment of the antiviral state. Cleaves and inhibits host MAVS, thereby inhibiting the type-I IFN production and the establishment of the antiviral state. Plays an essential role in the virus replication cycle by acting as a viroporin. Creates a pore in the host endoplasmic reticulum and as a consequence releases Ca2+ in the cytoplasm of infected cell. In turn, high levels of cytoplasmic calcium may trigger membrane trafficking and transport of viral ER-associated proteins to viroplasms, sites of viral genome replication. Functionally, induces and associates with structural rearrangements of intracellular membranes. Displays RNA-binding, nucleotide binding and NTPase activities. May play a role in virion morphogenesis and viral RNA encapsidation by interacting with the capsid protein VP3. In terms of biological role, localizes the viral replication complex to the surface of membranous vesicles. Together with protein 3CD binds the Cis-Active RNA Element (CRE) which is involved in RNA synthesis initiation. Acts as a cofactor to stimulate the activity of 3D polymerase, maybe through a nucleid acid chaperone activity. Its function is as follows. Localizes the viral replication complex to the surface of membranous vesicles. It inhibits host cell endoplasmic reticulum-to-Golgi apparatus transport and causes the disassembly of the Golgi complex, possibly through GBF1 interaction. This would result in depletion of MHC, trail receptors and IFN receptors at the host cell surface. Plays an essential role in viral RNA replication by recruiting ACBD3 and PI4KB at the viral replication sites, thereby allowing the formation of the rearranged membranous structures where viral replication takes place. Acts as a primer for viral RNA replication and remains covalently bound to viral genomic RNA. VPg is uridylylated prior to priming replication into VPg-pUpU. The oriI viral genomic sequence may act as a template for this. The VPg-pUpU is then used as primer on the genomic RNA poly(A) by the RNA-dependent RNA polymerase to replicate the viral genome. During genome replication, the VPg-RNA linkage is removed by the host TDP2, thereby accelerating replication. During the late stage of the replication cycle, host TDP2 is excluded from sites of viral RNA synthesis and encapsidation, allowing for the generation of progeny virions. Functionally, involved in the viral replication complex and viral polypeptide maturation. It exhibits protease activity with a specificity and catalytic efficiency that is different from protease 3C. Protein 3CD lacks polymerase activity. Protein 3CD binds to the 5'UTR of the viral genome. In terms of biological role, major viral protease that mediates proteolytic processing of the polyprotein. Cleaves host EIF5B, contributing to host translation shutoff. Also cleaves host PABPC1, contributing to host translation shutoff. Cleaves host RIGI and thus contributes to the inhibition of type I interferon production. Cleaves host NLRP1, triggers host N-glycine-mediated degradation of the autoinhibitory NLRP1 N-terminal fragment. Inhibits the integrated stress response (ISR) in the infected cell by cleaving host G3BP1. Stress granule formation is thus inhibited, which allows protein synthesis and viral replication. Its function is as follows. Replicates the viral genomic RNA on the surface of intracellular membranes. May form linear arrays of subunits that propagate along a strong head-to-tail interaction called interface-I. Covalently attaches UMP to a tyrosine of VPg, which is used to prime RNA synthesis. The positive stranded RNA genome is first replicated at virus induced membranous vesicles, creating a dsRNA genomic replication form. This dsRNA is then used as template to synthesize positive stranded RNA genomes. ss(+)RNA genomes are either translated, replicated or encapsidated. The polypeptide is Genome polyprotein (Poliovirus type 3 (strain 23127)).